A 349-amino-acid chain; its full sequence is DNA replication and repair protein RecF (349 aa).

Position 30 to 37 (30 to 37) interacts with ATP; the sequence is GKNGSGKT.

Belongs to the RecF family.

The protein resides in the cytoplasm. Its function is as follows. The RecF protein is involved in DNA metabolism; it is required for DNA replication and normal SOS inducibility. RecF binds preferentially to single-stranded, linear DNA. It also seems to bind ATP. The protein is DNA replication and repair protein RecF of Francisella tularensis subsp. holarctica (strain FTNF002-00 / FTA).